The primary structure comprises 1322 residues: Ice nucleation protein InaA (1322 aa).

An octapeptide periodicity region spans residues 162–1281 (ATYGSTLSGT…LTAGENSVLI (1120 aa)). 4 stretches are compositionally biased toward polar residues: residues 271–302 (SLTA…QKGS), 327–350 (TQTA…QKGS), 373–398 (GSTQ…QKGS), and 423–446 (TQTA…QKGS). Disordered regions lie at residues 271 to 303 (SLTA…KGSD), 327 to 358 (TQTA…GYGS), 372 to 399 (YGST…KGSD), and 423 to 448 (TQTA…GSDL).

This sequence belongs to the bacterial ice nucleation protein family.

The protein localises to the cell outer membrane. Functionally, ice nucleation proteins enable bacteria to nucleate crystallization in supercooled water. The polypeptide is Ice nucleation protein InaA (inaA) (Pantoea ananas (Erwinia uredovora)).